A 444-amino-acid chain; its full sequence is Ribulose bisphosphate carboxylase large chain (444 aa).

N6,N6,N6-trimethyllysine is present on Lys5. Substrate contacts are provided by Asn114 and Thr164. Lys166 serves as the catalytic Proton acceptor. Residue Lys168 participates in substrate binding. Residues Lys192, Asp194, and Glu195 each coordinate Mg(2+). Lys192 carries the post-translational modification N6-carboxylysine. The active-site Proton acceptor is the His285. Substrate contacts are provided by Arg286, His318, and Ser370.

This sequence belongs to the RuBisCO large chain family. Type I subfamily. As to quaternary structure, heterohexadecamer of 8 large chains and 8 small chains; disulfide-linked. The disulfide link is formed within the large subunit homodimers. Mg(2+) serves as cofactor. In terms of processing, the disulfide bond which can form in the large chain dimeric partners within the hexadecamer appears to be associated with oxidative stress and protein turnover.

Its subcellular location is the plastid. It localises to the chloroplast. The enzyme catalyses 2 (2R)-3-phosphoglycerate + 2 H(+) = D-ribulose 1,5-bisphosphate + CO2 + H2O. It catalyses the reaction D-ribulose 1,5-bisphosphate + O2 = 2-phosphoglycolate + (2R)-3-phosphoglycerate + 2 H(+). Its function is as follows. RuBisCO catalyzes two reactions: the carboxylation of D-ribulose 1,5-bisphosphate, the primary event in carbon dioxide fixation, as well as the oxidative fragmentation of the pentose substrate in the photorespiration process. Both reactions occur simultaneously and in competition at the same active site. This Botrychium strictum (Fern) protein is Ribulose bisphosphate carboxylase large chain.